The chain runs to 1142 residues: DNA-directed RNA polymerase subunit beta N-terminal section (1142 aa).

The protein belongs to the RNA polymerase beta chain family. As to quaternary structure, in plastids the minimal PEP RNA polymerase catalytic core is composed of four subunits: alpha, beta, beta', and beta''. When a (nuclear-encoded) sigma factor is associated with the core the holoenzyme is formed, which can initiate transcription.

It is found in the plastid. Its subcellular location is the chloroplast. It carries out the reaction RNA(n) + a ribonucleoside 5'-triphosphate = RNA(n+1) + diphosphate. DNA-dependent RNA polymerase catalyzes the transcription of DNA into RNA using the four ribonucleoside triphosphates as substrates. The sequence is that of DNA-directed RNA polymerase subunit beta N-terminal section (rpoB1) from Pleurastrum terricola (Filamentous green alga).